The chain runs to 190 residues: Small ribosomal subunit protein uS5 (190 aa).

The S5 DRBM domain occupies 22–85; sequence FVDKLVHINR…ESAKRNLTRV (64 aa).

The protein belongs to the universal ribosomal protein uS5 family. As to quaternary structure, part of the 30S ribosomal subunit. Contacts proteins S4 and S8.

In terms of biological role, with S4 and S12 plays an important role in translational accuracy. Its function is as follows. Located at the back of the 30S subunit body where it stabilizes the conformation of the head with respect to the body. In Rhodopseudomonas palustris (strain BisB18), this protein is Small ribosomal subunit protein uS5.